The chain runs to 316 residues: Olfactory receptor class A-like protein 1 (316 aa).

Topologically, residues 1–8 (MDLCVTIK) are extracellular. The chain crosses the membrane as a helical span at residues 9–29 (GVSFLLQAGLGILANALVLLA). Residues 30-39 (YAHIRLAEAR) are Cytoplasmic-facing. A helical transmembrane segment spans residues 40 to 60 (LQPVDAILCHLALVDLLLLLT). Residues 61–97 (RGVPQTMTVFGMRNLLDDTGCKVVIYTYRIARALSVC) lie on the Extracellular side of the membrane. Cys81 and Cys169 are joined by a disulfide. Residues 98–118 (ITCMLSVFQAVTVAPAAGPLL) form a helical membrane-spanning segment. Residues 119–132 (SGVKARLPQLLAPT) lie on the Cytoplasmic side of the membrane. The helical transmembrane segment at 133–153 (FAALWFINMAVCIAAPFFSVA) threads the bilayer. Residues 154-187 (PRNGTVPPFTLNLGFCHVDFHDNLSYVLNGVAVS) are Extracellular-facing. N-linked (GlcNAc...) asparagine glycans are attached at residues Asn156 and Asn176. Residues 188–208 (VRDFAFVGAMLASSGFILLLL) traverse the membrane as a helical segment. The Cytoplasmic segment spans residues 209–233 (HRHRRQVRAVRRSQGSTMETRAART). Residues 234–254 (VLMLVILYSVFFGIDNVIWIY) traverse the membrane as a helical segment. The Extracellular segment spans residues 255–264 (MLTVAQVPPV). The helical transmembrane segment at 265–285 (VADMRVFFSSCYASLSPFLII) threads the bilayer. At 286 to 316 (SSNRKLKARMVCATSEQERQAEDGKNSSGKN) the chain is on the cytoplasmic side.

It belongs to the G-protein coupled receptor 1 family. Highly expressed in the olfactory rosette where it localizes to a subset of olfactory sensory neurons, mainly in the apical region of the neuroepithelium. Not detected in other tissues tested.

It localises to the cell membrane. Functionally, probable pheromone receptor. Shows high specificity for 4-hydroxyphenylacetic acid. Activation of the receptor stimulates intracellular calcium release. The protein is Olfactory receptor class A-like protein 1 of Danio rerio (Zebrafish).